A 729-amino-acid chain; its full sequence is DNA replication licensing factor MCM5 (729 aa).

One can recognise an MCM domain in the interval alanine 326–isoleucine 532. Residue glycine 376–serine 383 coordinates ATP. Residues serine 508–aspartate 511 carry the Arginine finger motif.

This sequence belongs to the MCM family. In terms of assembly, component of the minichromosome maintenance (MCM) complex, a heterotetramer composed of MCM2, MCM3, MCM4, MCM5, MCM6 and MCM7.

It localises to the nucleus. The enzyme catalyses ATP + H2O = ADP + phosphate + H(+). Probable component of the MCM2-7 complex (MCM complex) that may function as a DNA helicase and which is essential to undergo a single round of replication initiation and elongation per cell cycle in eukaryotic cells. In Oryza sativa subsp. indica (Rice), this protein is DNA replication licensing factor MCM5 (MCM5).